The chain runs to 244 residues: MRTIKLTIEYDGTNYAGWQVQPNGLAVQQVLEEALLRLLGERVRLRSSGRTDAGVHARAMVASFTTSRSLPLQAFVGGANRFLPDDIAILSAAEAAPEFRPIQDARSKWYRYTIYNAPVRSPLRRLFSWHVREPLDTDAMQLAAHHFPGRHDFAAFRASNCAAKTTLRRIDSVTIASEGELIVIDVIGEGFLKNMVRVMAGTLVDVGRGRFEPERVAWLLENPDRKKAGVTAPACGLCLMDVSY.

Aspartate 52 serves as the catalytic Nucleophile. Tyrosine 110 contacts substrate.

It belongs to the tRNA pseudouridine synthase TruA family. Homodimer.

It carries out the reaction uridine(38/39/40) in tRNA = pseudouridine(38/39/40) in tRNA. Its function is as follows. Formation of pseudouridine at positions 38, 39 and 40 in the anticodon stem and loop of transfer RNAs. The polypeptide is tRNA pseudouridine synthase A (Pelobacter propionicus (strain DSM 2379 / NBRC 103807 / OttBd1)).